The following is a 429-amino-acid chain: UPF0597 protein BT_2080 (429 aa).

Belongs to the UPF0597 family.

The polypeptide is UPF0597 protein BT_2080 (Bacteroides thetaiotaomicron (strain ATCC 29148 / DSM 2079 / JCM 5827 / CCUG 10774 / NCTC 10582 / VPI-5482 / E50)).